Reading from the N-terminus, the 334-residue chain is NAD-dependent protein deacylase sirtuin-6 (334 aa).

The residue at position 2 (serine 2) is an N-acetylserine. At serine 10 the chain carries Phosphoserine. The Deacetylase sirtuin-type domain occupies proline 27–glutamate 272. Lysine 33 carries the post-translational modification N6-acetyllysine. Positions 53, 57, 64, 65, 71, 113, and 133 each coordinate NAD(+). Histidine 133 functions as the Proton acceptor in the catalytic mechanism. Residues cysteine 141, cysteine 144, and cysteine 166 each coordinate Zn(2+). A Glycyl lysine isopeptide (Lys-Gly) (interchain with G-Cter in ubiquitin) cross-link involves residue lysine 170. Zn(2+) is bound at residue cysteine 177. Residues glycine 214, serine 216, asparagine 240, glutamine 242, and valine 258 each coordinate NAD(+). Residues lysine 312–serine 334 form a disordered region.

It belongs to the sirtuin family. Class IV subfamily. Homodimer; binds to nucleosomes and DNA ends as a homodimer. Interacts with RELA; interferes with RELA binding to target DNA. Interacts with SMARCA5; promoting recruitment of SMARCA5/SNF2H to double-strand breaks (DSBs) sites. Interacts with the mTORC2 complex; preventing the ability of SIRT6 to deacetylate FOXO1. Interacts with the CLOCK-BMAL1 complex; recruited by the CLOCK-BMAL1 complex to regulate expression of clock-controlled genes. Interacts with CSNK2A2; preventing CSNK2A2 localization to the nucleus. Zn(2+) is required as a cofactor. Acetylated at Lys-33. Deacetylation at Lys-33 by SIRT1 promotes homomultimerization and binding to double-strand breaks (DSBs) sites. Post-translationally, phosphorylation at Ser-10 by MAPK8/JNK1 in response to oxidative stress stimulates the mono-ADP-ribosyltransferase activity on PARP1, leading to PARP1 recruitment to double-strand breaks (DSBs). In terms of processing, monoubiquitinated at Lys-170 by STUB1/CHIP, preventing its degradation by the proteasome. Sumoylated, leading to specifically decrease ability to deacetylate histone H3 at 'Lys-56' (H3K56ac). Highest levels are found in muscle, thymus, spleen, brain and heart (at protein level).

The protein resides in the nucleus. The protein localises to the chromosome. It localises to the telomere. It is found in the endoplasmic reticulum. It catalyses the reaction N(6)-acetyl-L-lysyl-[protein] + NAD(+) + H2O = 2''-O-acetyl-ADP-D-ribose + nicotinamide + L-lysyl-[protein]. The enzyme catalyses N(6)-tetradecanoyl-L-lysyl-[protein] + NAD(+) + H2O = 2''-O-tetradecanoyl-ADP-D-ribose + nicotinamide + L-lysyl-[protein]. The catalysed reaction is N(6)-hexadecanoyl-L-lysyl-[protein] + NAD(+) + H2O = 2''-O-hexadecanoyl-ADP-D-ribose + nicotinamide + L-lysyl-[protein]. It carries out the reaction L-lysyl-[protein] + NAD(+) = N(6)-(ADP-D-ribosyl)-L-lysyl-[protein] + nicotinamide + H(+). It catalyses the reaction L-arginyl-[protein] + NAD(+) = N(omega)-(ADP-D-ribosyl)-L-arginyl-[protein] + nicotinamide + H(+). Its activity is regulated as follows. Compared to the defatty-acylase activity, the protein deacetylase activity is weak in vitro, and requires activation. The histone deacetylase activity is strongly activated upon binding to nucleosomes and chromatin in vivo. Two molecules of SIRT6 associate with the acidic patch of one nucleosome, while the C-terminal disordered region of SIRT6 associates with nucleosomal DNA, leading to efficient histone deacetylation. The protein-lysine deacetylase activity is also activated by long-chain free fatty-acids. Its function is as follows. NAD-dependent protein deacetylase, deacylase and mono-ADP-ribosyltransferase that plays an essential role in DNA damage repair, telomere maintenance, metabolic homeostasis, inflammation, tumorigenesis and aging. Displays protein-lysine deacetylase or defatty-acylase (demyristoylase and depalmitoylase) activity, depending on the context. Acts as a key histone deacetylase by catalyzing deacetylation of histone H3 at 'Lys-9', 'Lys-18' and 'Lys-56' (H3K9ac, H3K18ac and H3K56ac, respectively), suppressing target gene expression of several transcription factors, including NF-kappa-B. Acts as an inhibitor of transcription elongation by mediating deacetylation of H3K9ac and H3K56ac, preventing release of NELFE from chromatin and causing transcriptional pausing. Involved in DNA repair by promoting double-strand break (DSB) repair: acts as a DSB sensor by recognizing and binding DSB sites, leading to (1) recruitment of DNA repair proteins, such as SMARCA5/SNF2H, and (2) deacetylation of histone H3K9ac and H3K56ac. SIRT6 participation to DSB repair is probably involved in extension of life span. Also promotes DNA repair by deacetylating non-histone proteins, such as DDB2 and p53/TP53. Specifically deacetylates H3K18ac at pericentric heterochromatin, thereby maintaining pericentric heterochromatin silencing at centromeres and protecting against genomic instability and cellular senescence. Involved in telomere maintenance by catalyzing deacetylation of histone H3 in telomeric chromatin, regulating telomere position effect and telomere movement in response to DNA damage. Required for embryonic stem cell differentiation by mediating histone deacetylation of H3K9ac. Plays a major role in metabolism by regulating processes such as glycolysis, gluconeogenesis, insulin secretion and lipid metabolism. Inhibits glycolysis via histone deacetylase activity and by acting as a corepressor of the transcription factor HIF1A, thereby controlling the expression of multiple glycolytic genes. Has tumor suppressor activity by repressing glycolysis, thereby inhibiting the Warburg effect. Also regulates glycolysis and tumorigenesis by mediating deacetylation and nuclear export of non-histone proteins, such as isoform M2 of PKM (PKM2). Acts as a negative regulator of gluconeogenesis by mediating deacetylation of non-histone proteins, such as FOXO1 and KAT2A/GCN5. Promotes beta-oxidation of fatty acids during fasting by catalyzing deacetylation of NCOA2, inducing coactivation of PPARA. Acts as a regulator of lipid catabolism in brown adipocytes, both by catalyzing deacetylation of histones and non-histone proteins, such as FOXO1. Also acts as a regulator of circadian rhythms, both by regulating expression of clock-controlled genes involved in lipid and carbohydrate metabolism, and by catalyzing deacetylation of PER2. The defatty-acylase activity is specifically involved in regulation of protein secretion. Has high activity toward long-chain fatty acyl groups and mediates protein-lysine demyristoylation and depalmitoylation of target proteins, such as RRAS2 and TNF, thereby regulating their secretion. Also acts as a mono-ADP-ribosyltransferase by mediating mono-ADP-ribosylation of PARP1, TRIM28/KAP1 or SMARCC2/BAF170. Mono-ADP-ribosyltransferase activity is involved in DNA repair, cellular senescence, repression of LINE-1 retrotransposon elements and regulation of transcription. This chain is NAD-dependent protein deacylase sirtuin-6, found in Mus musculus (Mouse).